The chain runs to 313 residues: Olfactory receptor 1J1 (313 aa).

Residues methionine 1–glycine 25 are Extracellular-facing. Asparagine 5 carries N-linked (GlcNAc...) asparagine glycosylation. Residues isoleucine 26 to isoleucine 46 form a helical membrane-spanning segment. Residues leucine 47–threonine 57 are Cytoplasmic-facing. Residues proline 58 to valine 78 form a helical membrane-spanning segment. Residues proline 79–cysteine 97 lie on the Extracellular side of the membrane. A disulfide bridge connects residues cysteine 97 and cysteine 189. A helical transmembrane segment spans residues valine 98–methionine 118. The Cytoplasmic segment spans residues alanine 119 to alanine 142. Residues methionine 143 to leucine 163 form a helical membrane-spanning segment. The Extracellular portion of the chain corresponds to aspartate 164 to glutamine 196. Residues leucine 197 to serine 217 form a helical membrane-spanning segment. The Cytoplasmic segment spans residues tyrosine 218–threonine 240. Residues cysteine 241–leucine 261 form a helical membrane-spanning segment. At proline 262–asparagine 271 the chain is on the extracellular side. A helical transmembrane segment spans residues isoleucine 272–leucine 292. Residues arginine 293–lysine 313 lie on the Cytoplasmic side of the membrane.

Belongs to the G-protein coupled receptor 1 family.

It localises to the cell membrane. Odorant receptor. The polypeptide is Olfactory receptor 1J1 (Mus musculus (Mouse)).